We begin with the raw amino-acid sequence, 596 residues long: uncharacterized protein (596 aa).

Residues 7-26 form a helical membrane-spanning segment; it reads FWPILLGFTVLVAAGLYYVV.

It is found in the membrane. This is an uncharacterized protein from Sinorhizobium fredii (strain NBRC 101917 / NGR234).